The chain runs to 77 residues: Probable Fe(2+)-trafficking protein (77 aa).

The protein belongs to the Fe(2+)-trafficking protein family. As to quaternary structure, monomer.

Could be a mediator in iron transactions between iron acquisition and iron-requiring processes, such as synthesis and/or repair of Fe-S clusters in biosynthetic enzymes. This is Probable Fe(2+)-trafficking protein from Buchnera aphidicola subsp. Acyrthosiphon pisum (strain APS) (Acyrthosiphon pisum symbiotic bacterium).